The following is a 131-amino-acid chain: Proteinase inhibitor (131 aa).

A signal peptide spans 1-26; sequence MSASAKLSRMVCLLCGFFSTGISMAS. A disulfide bond links cysteine 51 and cysteine 74.

The protein belongs to the protease inhibitor I38 family.

Its subcellular location is the periplasm. Functionally, inhibitor of the alkaline protease. It forms a non-covalent bond with the protease and may prevent its autocatalytic cleavage in the periplasm. The sequence is that of Proteinase inhibitor (inh) from Pseudomonas aeruginosa (strain ATCC 15692 / DSM 22644 / CIP 104116 / JCM 14847 / LMG 12228 / 1C / PRS 101 / PAO1).